A 232-amino-acid polypeptide reads, in one-letter code: tRNA (guanine-N(1)-)-methyltransferase (232 aa).

Residues Gly-108 and Ile-128–Met-133 each bind S-adenosyl-L-methionine.

This sequence belongs to the RNA methyltransferase TrmD family. In terms of assembly, homodimer.

The protein localises to the cytoplasm. It catalyses the reaction guanosine(37) in tRNA + S-adenosyl-L-methionine = N(1)-methylguanosine(37) in tRNA + S-adenosyl-L-homocysteine + H(+). Its function is as follows. Specifically methylates guanosine-37 in various tRNAs. The chain is tRNA (guanine-N(1)-)-methyltransferase from Campylobacter fetus subsp. fetus (strain 82-40).